Reading from the N-terminus, the 219-residue chain is Imidazole glycerol phosphate synthase subunit HisH (219 aa).

The region spanning 2–218 (KVVVIDSGTG…MVWTPEGTSG (217 aa)) is the Glutamine amidotransferase type-1 domain. C87 serves as the catalytic Nucleophile. Catalysis depends on residues H193 and E195.

Heterodimer of HisH and HisF.

The protein resides in the cytoplasm. It catalyses the reaction 5-[(5-phospho-1-deoxy-D-ribulos-1-ylimino)methylamino]-1-(5-phospho-beta-D-ribosyl)imidazole-4-carboxamide + L-glutamine = D-erythro-1-(imidazol-4-yl)glycerol 3-phosphate + 5-amino-1-(5-phospho-beta-D-ribosyl)imidazole-4-carboxamide + L-glutamate + H(+). It carries out the reaction L-glutamine + H2O = L-glutamate + NH4(+). The protein operates within amino-acid biosynthesis; L-histidine biosynthesis; L-histidine from 5-phospho-alpha-D-ribose 1-diphosphate: step 5/9. IGPS catalyzes the conversion of PRFAR and glutamine to IGP, AICAR and glutamate. The HisH subunit catalyzes the hydrolysis of glutamine to glutamate and ammonia as part of the synthesis of IGP and AICAR. The resulting ammonia molecule is channeled to the active site of HisF. The polypeptide is Imidazole glycerol phosphate synthase subunit HisH (Granulibacter bethesdensis (strain ATCC BAA-1260 / CGDNIH1)).